A 563-amino-acid chain; its full sequence is Probable Xaa-Pro aminopeptidase PEPP (563 aa).

The Mn(2+) site is built by D331, D342, E491, and E532.

It belongs to the peptidase M24B family. It depends on Mn(2+) as a cofactor.

It catalyses the reaction Release of any N-terminal amino acid, including proline, that is linked to proline, even from a dipeptide or tripeptide.. In terms of biological role, catalyzes the removal of a penultimate prolyl residue from the N-termini of peptides. In Verticillium alfalfae (strain VaMs.102 / ATCC MYA-4576 / FGSC 10136) (Verticillium wilt of alfalfa), this protein is Probable Xaa-Pro aminopeptidase PEPP (PEPP).